Reading from the N-terminus, the 133-residue chain is S-protein homolog 21 (133 aa).

Residues methionine 1–glycine 21 form the signal peptide.

This sequence belongs to the plant self-incompatibility (S1) protein family.

It is found in the secreted. The chain is S-protein homolog 21 from Arabidopsis thaliana (Mouse-ear cress).